Here is a 586-residue protein sequence, read N- to C-terminus: Nucleus accumbens-associated protein 2 (586 aa).

One can recognise a BTB domain in the interval 30-94 (CDVSIVVKGQ…CYTGKLTMAA (65 aa)). Lysine 171 is covalently cross-linked (Glycyl lysine isopeptide (Lys-Gly) (interchain with G-Cter in SUMO2)). Residues 177–196 (MPPASGPGLASKRPLETGPR) are disordered. Lysine 215 is covalently cross-linked (Glycyl lysine isopeptide (Lys-Gly) (interchain with G-Cter in SUMO2)). Residues 236-272 (QVPYPPGERTSPGASSLPTTDSPTSYHNEEDEEDDEA) are disordered. The span at 247-261 (PGASSLPTTDSPTSY) shows a compositional bias: polar residues. Residues lysine 297, lysine 427, and lysine 454 each participate in a glycyl lysine isopeptide (Lys-Gly) (interchain with G-Cter in SUMO2) cross-link. The region spanning 349 to 446 (GSGVYITRGQ…DMCTNARRVR (98 aa)) is the BEN domain. The segment at 542-586 (APEQLPADGQSSPQAFEQGNTSSSRPQTPVATATRRPEGTYAGTL) is disordered. The segment covering 550 to 572 (GQSSPQAFEQGNTSSSRPQTPVA) has biased composition (polar residues).

As to quaternary structure, homooligomer; mediated by the BTB domain. Interacts with the NuRD complex. Interacts (via C-terminal part) with HDAC2. Interacts (via BTB domain) with MTA1, MTA2 and MTA3.

The protein resides in the nucleus. Functions as a transcriptional repressor through its association with the NuRD complex. Recruits the NuRD complex to the promoter of MDM2, leading to the repression of MDM2 transcription and subsequent stability of p53/TP53. The protein is Nucleus accumbens-associated protein 2 (Nacc2) of Mus musculus (Mouse).